Reading from the N-terminus, the 541-residue chain is Glucose-6-phosphate isomerase (541 aa).

E346 serves as the catalytic Proton donor. Residues H377 and K506 contribute to the active site.

This sequence belongs to the GPI family.

The protein resides in the cytoplasm. The catalysed reaction is alpha-D-glucose 6-phosphate = beta-D-fructose 6-phosphate. Its pathway is carbohydrate biosynthesis; gluconeogenesis. It functions in the pathway carbohydrate degradation; glycolysis; D-glyceraldehyde 3-phosphate and glycerone phosphate from D-glucose: step 2/4. In terms of biological role, catalyzes the reversible isomerization of glucose-6-phosphate to fructose-6-phosphate. The polypeptide is Glucose-6-phosphate isomerase (Rhizobium etli (strain CIAT 652)).